A 107-amino-acid chain; its full sequence is Large ribosomal subunit protein uL24 (107 aa).

This sequence belongs to the universal ribosomal protein uL24 family. In terms of assembly, part of the 50S ribosomal subunit.

In terms of biological role, one of two assembly initiator proteins, it binds directly to the 5'-end of the 23S rRNA, where it nucleates assembly of the 50S subunit. One of the proteins that surrounds the polypeptide exit tunnel on the outside of the subunit. This chain is Large ribosomal subunit protein uL24, found in Carboxydothermus hydrogenoformans (strain ATCC BAA-161 / DSM 6008 / Z-2901).